A 363-amino-acid polypeptide reads, in one-letter code: Tetraacyldisaccharide 4'-kinase (363 aa).

Residue 62–69 coordinates ATP; it reads RVGGTGKT.

The protein belongs to the LpxK family.

It carries out the reaction a lipid A disaccharide + ATP = a lipid IVA + ADP + H(+). The protein operates within glycolipid biosynthesis; lipid IV(A) biosynthesis; lipid IV(A) from (3R)-3-hydroxytetradecanoyl-[acyl-carrier-protein] and UDP-N-acetyl-alpha-D-glucosamine: step 6/6. Its function is as follows. Transfers the gamma-phosphate of ATP to the 4'-position of a tetraacyldisaccharide 1-phosphate intermediate (termed DS-1-P) to form tetraacyldisaccharide 1,4'-bis-phosphate (lipid IVA). The sequence is that of Tetraacyldisaccharide 4'-kinase from Polynucleobacter asymbioticus (strain DSM 18221 / CIP 109841 / QLW-P1DMWA-1) (Polynucleobacter necessarius subsp. asymbioticus).